The following is a 349-amino-acid chain: Isopentenyl-diphosphate delta-isomerase (349 aa).

6–7 lines the substrate pocket; that stretch reads RK. FMN is bound by residues 62–64, S93, and N122; that span reads AMT. A substrate-binding site is contributed by Q152. E153 is a binding site for Mg(2+). FMN is bound by residues K184, T214, 258 to 259, and 280 to 281; these read GG and AG.

This sequence belongs to the IPP isomerase type 2 family. As to quaternary structure, homooctamer. Dimer of tetramers. The cofactor is FMN. NADPH serves as cofactor. It depends on Mg(2+) as a cofactor.

The protein localises to the cytoplasm. It carries out the reaction isopentenyl diphosphate = dimethylallyl diphosphate. Functionally, involved in the biosynthesis of isoprenoids. Catalyzes the 1,3-allylic rearrangement of the homoallylic substrate isopentenyl (IPP) to its allylic isomer, dimethylallyl diphosphate (DMAPP). This Bacillus cereus (strain ATCC 14579 / DSM 31 / CCUG 7414 / JCM 2152 / NBRC 15305 / NCIMB 9373 / NCTC 2599 / NRRL B-3711) protein is Isopentenyl-diphosphate delta-isomerase.